Reading from the N-terminus, the 201-residue chain is Ribonuclease HII (201 aa).

The RNase H type-2 domain occupies 12–201; it reads DLVAGVDEVG…VRELLDVSVQ (190 aa). Positions 18, 19, and 110 each coordinate a divalent metal cation.

This sequence belongs to the RNase HII family. It depends on Mn(2+) as a cofactor. The cofactor is Mg(2+).

The protein resides in the cytoplasm. The catalysed reaction is Endonucleolytic cleavage to 5'-phosphomonoester.. Functionally, endonuclease that specifically degrades the RNA of RNA-DNA hybrids. The chain is Ribonuclease HII from Pseudomonas aeruginosa (strain LESB58).